The sequence spans 408 residues: Flavohemoprotein (408 aa).

The region spanning Met1–Gly138 is the Globin domain. Position 85 (His85) interacts with heme b. Active-site charge relay system residues include Tyr95 and Glu137. The tract at residues Gly149 to Val408 is reductase. Residues Asn152–Asp263 enclose the FAD-binding FR-type domain. Residues Tyr190 and Arg205–Ser208 each bind FAD. Position 277 to 282 (Gly277 to Pro282) interacts with NADP(+). Residue Phe398 to Pro401 participates in FAD binding.

The protein belongs to the globin family. Two-domain flavohemoproteins subfamily. It in the C-terminal section; belongs to the flavoprotein pyridine nucleotide cytochrome reductase family. Requires heme b as cofactor. FAD is required as a cofactor.

It carries out the reaction 2 nitric oxide + NADPH + 2 O2 = 2 nitrate + NADP(+) + H(+). The catalysed reaction is 2 nitric oxide + NADH + 2 O2 = 2 nitrate + NAD(+) + H(+). The chain is Flavohemoprotein from Rhodopirellula baltica (strain DSM 10527 / NCIMB 13988 / SH1).